The chain runs to 246 residues: 14-3-3 protein beta/alpha (246 aa).

Residue Met-1 is modified to N-acetylmethionine. Residue Thr-2 is modified to N-acetylthreonine; in 14-3-3 protein beta/alpha, N-terminally processed. Thr-2 is subject to Phosphothreonine. Lys-5 carries the N6-acetyllysine modification. Lys-51 carries the post-translational modification N6-acetyllysine; alternate. Lys-51 is covalently cross-linked (Glycyl lysine isopeptide (Lys-Gly) (interchain with G-Cter in SUMO2); alternate). Position 60 is a phosphoserine (Ser-60). Lys-70 carries the post-translational modification N6-acetyllysine. 2 positions are modified to 3'-nitrotyrosine: Tyr-84 and Tyr-106. Lys-117 bears the N6-acetyllysine mark. 2 positions are modified to phosphoserine: Ser-186 and Ser-232.

This sequence belongs to the 14-3-3 family. In terms of assembly, homodimer. Interacts with SAMSN1 and PRKCE. Interacts with AKAP13. Interacts with SSH1 and TORC2/CRTC2. Interacts with ABL1; the interaction results in cytoplasmic location of ABL1 and inhibition of cABL-mediated apoptosis. Interacts with ROR2 (dimer); the interaction results in phosphorylation of YWHAB on tyrosine residues. Interacts with GAB2. Interacts with YAP1 (phosphorylated form). Interacts with the phosphorylated (by AKT1) form of SRPK2. Interacts with PKA-phosphorylated AANAT. Interacts with MYO1C. Interacts with SIRT2. Interacts with the 'Thr-369' phosphorylated form of DAPK2. Interacts with PI4KB, TBC1D22A and TBC1D22B. Interacts with the 'Ser-1134' and 'Ser-1161' phosphorylated form of SOS1. Interacts (via phosphorylated form) with YWHAB; this interaction occurs in a protein kinase AKT1-dependent manner. Interacts with SLITRK1. Interacts with SYNPO2 (phosphorylated form); YWHAB competes with ACTN2 for interaction with SYNPO2. Interacts with RIPOR2 (via phosphorylated form); this interaction occurs in a chemokine-dependent manner and does not compete for binding of RIPOR2 with RHOA nor blocks inhibition of RIPOR2-mediated RHOA activity. Interacts with MARK2 and MARK3. Interacts with TESK1; the interaction is dependent on the phosphorylation of TESK1 'Ser-439' and inhibits TESK1 kinase activity. Interacts with MEFV. Interacts with HDAC4. Interacts with ADAM22 (via C-terminus). The alpha, brain-specific form differs from the beta form in being phosphorylated. Phosphorylated on Ser-60 by protein kinase C delta type catalytic subunit in a sphingosine-dependent fashion.

It localises to the cytoplasm. The protein resides in the melanosome. Its function is as follows. Adapter protein implicated in the regulation of a large spectrum of both general and specialized signaling pathways. Binds to a large number of partners, usually by recognition of a phosphoserine or phosphothreonine motif. Binding generally results in the modulation of the activity of the binding partner. Negative regulator of osteogenesis. Blocks the nuclear translocation of the phosphorylated form (by AKT1) of SRPK2 and antagonizes its stimulatory effect on cyclin D1 expression resulting in blockage of neuronal apoptosis elicited by SRPK2. Negative regulator of signaling cascades that mediate activation of MAP kinases via AKAP13. The polypeptide is 14-3-3 protein beta/alpha (YWHAB) (Bos taurus (Bovine)).